Here is a 467-residue protein sequence, read N- to C-terminus: Neuromedin-K receptor (467 aa).

Residues Met1–Arg86 lie on the Extracellular side of the membrane. N-linked (GlcNAc...) asparagine glycans are attached at residues Asn23, Asn50, and Asn75. The helical transmembrane segment at Ile87–Ile109 threads the bilayer. The Cytoplasmic segment spans residues Trp110–Arg119. Residues Thr120 to Thr141 form a helical membrane-spanning segment. Over Leu142–Arg161 the chain is Extracellular. A disulfide bridge links Cys160 with Cys235. A helical transmembrane segment spans residues Phe162–Val183. The Cytoplasmic segment spans residues Asp184–Lys203. The helical transmembrane segment at Ile204–Ser224 threads the bilayer. The Extracellular segment spans residues Lys225 to Phe247. The chain crosses the membrane as a helical span at residues Ile248–Val272. The Cytoplasmic portion of the chain corresponds to Gly273–Lys301. A helical membrane pass occupies residues Met302 to Leu323. Topologically, residues Thr324–Ile336 are extracellular. The chain crosses the membrane as a helical span at residues Gln337–Leu361. The Cytoplasmic portion of the chain corresponds to Asn362 to Ser467. A lipid anchor (S-palmitoyl cysteine) is attached at Cys376. Residues Asp416–Ser467 are disordered. The segment covering Lys447 to Ser467 has biased composition (low complexity).

Belongs to the G-protein coupled receptor 1 family.

The protein localises to the cell membrane. This is a receptor for the tachykinin neuropeptide neuromedin-K (neurokinin B). It is associated with G proteins that activate a phosphatidylinositol-calcium second messenger system. This Oryctolagus cuniculus (Rabbit) protein is Neuromedin-K receptor (TACR3).